The chain runs to 220 residues: Urease accessory protein UreF (220 aa).

Belongs to the UreF family. In terms of assembly, ureD, UreF and UreG form a complex that acts as a GTP-hydrolysis-dependent molecular chaperone, activating the urease apoprotein by helping to assemble the nickel containing metallocenter of UreC. The UreE protein probably delivers the nickel.

It is found in the cytoplasm. Functionally, required for maturation of urease via the functional incorporation of the urease nickel metallocenter. The polypeptide is Urease accessory protein UreF (Jannaschia sp. (strain CCS1)).